Reading from the N-terminus, the 201-residue chain is Large ribosomal subunit protein uL4 (201 aa).

The disordered stretch occupies residues 39-70 (GRQGTKAQKTRSEVSGGGKKPWRQKGTGRARA).

The protein belongs to the universal ribosomal protein uL4 family. In terms of assembly, part of the 50S ribosomal subunit.

Functionally, one of the primary rRNA binding proteins, this protein initially binds near the 5'-end of the 23S rRNA. It is important during the early stages of 50S assembly. It makes multiple contacts with different domains of the 23S rRNA in the assembled 50S subunit and ribosome. In terms of biological role, forms part of the polypeptide exit tunnel. This is Large ribosomal subunit protein uL4 from Marinobacter nauticus (strain ATCC 700491 / DSM 11845 / VT8) (Marinobacter aquaeolei).